A 167-amino-acid polypeptide reads, in one-letter code: Protein-export protein SecB (167 aa).

Belongs to the SecB family. As to quaternary structure, homotetramer, a dimer of dimers. One homotetramer interacts with 1 SecA dimer.

Its subcellular location is the cytoplasm. Functionally, one of the proteins required for the normal export of preproteins out of the cell cytoplasm. It is a molecular chaperone that binds to a subset of precursor proteins, maintaining them in a translocation-competent state. It also specifically binds to its receptor SecA. The polypeptide is Protein-export protein SecB (Wolbachia pipientis wMel).